A 529-amino-acid polypeptide reads, in one-letter code: Glutamyl-tRNA(Gln) amidotransferase subunit B-2, chloroplastic/mitochondrial (529 aa).

Residues 17–61 are disordered; the sequence is STRVSLPRGSIPPPPTSSSSSSSSSREGRRPRFFSTTTTSAERPV.

The protein belongs to the GatB/GatE family. GatB subfamily. In terms of assembly, subunit of the heterotrimeric GatCAB amidotransferase (AdT) complex, composed of A, B and C subunits.

The protein localises to the mitochondrion. It is found in the plastid. It localises to the chloroplast. It catalyses the reaction L-glutamyl-tRNA(Gln) + L-glutamine + ATP + H2O = L-glutaminyl-tRNA(Gln) + L-glutamate + ADP + phosphate + H(+). Allows the formation of correctly charged Gln-tRNA(Gln) through the transamidation of misacylated Glu-tRNA(Gln) in chloroplasts and mitochondria. The reaction takes place in the presence of glutamine and ATP through an activated gamma-phospho-Glu-tRNA(Gln). The protein is Glutamyl-tRNA(Gln) amidotransferase subunit B-2, chloroplastic/mitochondrial of Micromonas commoda (strain RCC299 / NOUM17 / CCMP2709) (Picoplanktonic green alga).